The following is a 447-amino-acid chain: MSTMTPAEIVSELDKHIIGQAKAKKAVAVALRNRWRRQQVAEPLRQEITPKNILMIGPTGVGKTEIARRLAKLADAPFIKIEATKFTEVGYVGRDVDSIVRDLIEISVKQTRETEMRKVRSKATDLAEDRILDVLLPQPRAVGFGASAEHANDDNNATRQTFRKRLREGQLDDKEIELDIEQPAVGMDIMAPPGMEEMTEQIRSMFSNLGSGKKQRRKVKIKEALKLLTDEEAAKMLNDEEVKTKAVQNVEQNGIVFLDEIDKITSRNHEGGGGEVSRQGVQRDLLPLVEGTTINTKYGMVKTDHILFIASGAFHLAKPSDLIPELQGRFPIRVELDSLSVKDFEAILVATDASLVKQYQALLATEDVKLEFADDGIRRLAEIAYAVNEKTENIGARRLYTVIEKLLEEVSFAAGNHAGQSVTIDSAYVDHALGEVSKDEDLSRYVL.

Residues Ile18, 60–65 (GVGKTE), Asp259, Glu325, and Arg397 each bind ATP.

It belongs to the ClpX chaperone family. HslU subfamily. A double ring-shaped homohexamer of HslV is capped on each side by a ring-shaped HslU homohexamer. The assembly of the HslU/HslV complex is dependent on binding of ATP.

The protein resides in the cytoplasm. Functionally, ATPase subunit of a proteasome-like degradation complex; this subunit has chaperone activity. The binding of ATP and its subsequent hydrolysis by HslU are essential for unfolding of protein substrates subsequently hydrolyzed by HslV. HslU recognizes the N-terminal part of its protein substrates and unfolds these before they are guided to HslV for hydrolysis. This Burkholderia pseudomallei (strain K96243) protein is ATP-dependent protease ATPase subunit HslU.